Consider the following 558-residue polypeptide: Protein OS-9 homolog (558 aa).

An N-terminal signal peptide occupies residues 1 to 17 (MLLKSLALIASSSLAAT). N68 carries an N-linked (GlcNAc...) asparagine glycan. Residues 111–237 (GDCLFYEQGF…QVGTPRLCKD (127 aa)) form the MRH domain. A disulfide bond links C113 and C126. A mannooligosaccharide derivative is bound by residues Q133, R197, E219, and Y225. 2 cysteine pairs are disulfide-bonded: C190/C223 and C205/C235. Disordered regions lie at residues 435–508 (SKKL…DEDE) and 539–558 (KDLA…GLSD). A compositionally biased stretch (basic and acidic residues) spans 441-466 (KKEAASTKREEAKKQVEASVEEKAVD). Over residues 474–492 (DTVTSTQTFFRTQTLSTAE) the composition is skewed to polar residues. Acidic residues predominate over residues 543 to 558 (DKEDDDDDYEDYGLSD).

The protein belongs to the OS-9 family. In terms of assembly, interacts with missfolded ER lumenal proteins.

It localises to the endoplasmic reticulum membrane. In terms of biological role, lectin involved in the quality control of the secretory pathway. As a member of the endoplasmic reticulum-associated degradation lumenal (ERAD-L) surveillance system, targets misfolded endoplasmic reticulum lumenal glycoproteins for degradation. In Yarrowia lipolytica (strain CLIB 122 / E 150) (Yeast), this protein is Protein OS-9 homolog (YOS9).